Consider the following 934-residue polypeptide: Desmocollin 2-like protein (934 aa).

Cadherin domains lie at 167–274, 274–381, 382–494, and 495–600; these read RWRP…APEF, FTGN…PPTF, KEKL…GPEF, and NPNI…IPVI. Residues 167–716 lie on the Extracellular side of the membrane; the sequence is RWRPLPFSVV…SASVSLGNYG (550 aa). Asn197, Asn296, and Asn316 each carry an N-linked (GlcNAc...) asparagine glycan. Asn509, Asn565, and Asn569 each carry an N-linked (GlcNAc...) asparagine glycan. The helical transmembrane segment at 717–737 threads the bilayer; it reads ILALVLSGLLLLLLCLFLIFF. The Cytoplasmic segment spans residues 738–934; the sequence is CTTKRDKLQI…ICYTTNKTGK (197 aa).

As to expression, expressed at low levels in the brain and heart.

It is found in the cell junction. It localises to the desmosome. The protein localises to the cell membrane. A component of desmosome cell-cell junctions which are required for positive regulation of cellular adhesion. Involved in the interaction of plaque proteins and intermediate filaments mediating cell-cell adhesion. Involved in the formation and structural organization of desmosome cell-cell junctions during embryonic development. Required for embryogenesis, specifically for progression of epiboly and normal convergence-extension movements during gastrulation. Required for the development of desmosomal-rich midlines in the heart. Plays an important role in ventricular contraction and resulting heart stroke volume. This Danio rerio (Zebrafish) protein is Desmocollin 2-like protein.